Here is a 281-residue protein sequence, read N- to C-terminus: Formamidopyrimidine-DNA glycosylase (281 aa).

The active-site Schiff-base intermediate with DNA is Pro-2. The active-site Proton donor is Glu-3. Lys-58 (proton donor; for beta-elimination activity) is an active-site residue. The DNA site is built by His-100, Arg-119, and Arg-160. The FPG-type zinc-finger motif lies at 245 to 281 (RVYGREGAPCPTPGCTGTVQRIVQSGRSSFFCPLCQQ). The Proton donor; for delta-elimination activity role is filled by Arg-271.

The protein belongs to the FPG family. As to quaternary structure, monomer. Requires Zn(2+) as cofactor.

The catalysed reaction is Hydrolysis of DNA containing ring-opened 7-methylguanine residues, releasing 2,6-diamino-4-hydroxy-5-(N-methyl)formamidopyrimidine.. It carries out the reaction 2'-deoxyribonucleotide-(2'-deoxyribose 5'-phosphate)-2'-deoxyribonucleotide-DNA = a 3'-end 2'-deoxyribonucleotide-(2,3-dehydro-2,3-deoxyribose 5'-phosphate)-DNA + a 5'-end 5'-phospho-2'-deoxyribonucleoside-DNA + H(+). In terms of biological role, involved in base excision repair of DNA damaged by oxidation or by mutagenic agents. Acts as a DNA glycosylase that recognizes and removes damaged bases. Has a preference for oxidized purines, such as 7,8-dihydro-8-oxoguanine (8-oxoG). Has AP (apurinic/apyrimidinic) lyase activity and introduces nicks in the DNA strand. Cleaves the DNA backbone by beta-delta elimination to generate a single-strand break at the site of the removed base with both 3'- and 5'-phosphates. The sequence is that of Formamidopyrimidine-DNA glycosylase from Paracoccus denitrificans (strain Pd 1222).